We begin with the raw amino-acid sequence, 396 residues long: Decapping nuclease RAI1 (396 aa).

Residue 107–109 (YRG) participates in substrate binding. Glutamate 179 contacts a divalent metal cation. Glutamate 228 serves as a coordination point for substrate. Aspartate 230, glutamate 249, and leucine 250 together coordinate a divalent metal cation. Lysine 251 and glutamine 275 together coordinate substrate.

The protein belongs to the DXO/Dom3Z family. In terms of assembly, interacts with RAT1; the interaction is direct, stabilizes RAT1 protein structure and stimulates its exoribonuclease activity. The interaction also stimulates RAI1 pyrophosphohydrolase activity, probably by recruiting it to mRNA substrates. A divalent metal cation serves as cofactor.

Its subcellular location is the nucleus. It catalyses the reaction a 5'-end NAD(+)-phospho-ribonucleoside in mRNA + H2O = a 5'-end phospho-ribonucleoside in mRNA + NAD(+) + H(+). It carries out the reaction a 5'-end (N(7)-methyl 5'-triphosphoguanosine)-ribonucleoside-ribonucleotide in mRNA + H2O = a (N(7)-methyl 5'-triphosphoguanosine)-nucleoside + a 5'-end phospho-ribonucleoside in mRNA + H(+). The catalysed reaction is a 5'-end triphospho-ribonucleoside in mRNA + H2O = a 5'-end phospho-ribonucleoside in mRNA + diphosphate + H(+). Decapping enzyme for NAD-capped RNAs: specifically hydrolyzes the nicotinamide adenine dinucleotide (NAD) cap from a subset of RNAs by removing the entire NAD moiety from the 5'-end of an NAD-capped RNA. The NAD-cap is present at the 5'-end of some RNAs and snoRNAs. In contrast to the canonical 5'-end N7 methylguanosine (m7G) cap, the NAD cap promotes mRNA decay. Also acts as a non-canonical decapping enzyme that removes the entire cap structure of m7G capped or incompletely capped RNAs. Has decapping activity toward incomplete 5'-end m7G cap mRNAs such as unmethylated 5'-end-capped RNA (cap0), while it has no activity toward 2'-O-ribose methylated m7G cap (cap1). Also possesses RNA 5'-pyrophosphohydrolase activity by hydrolyzing the 5'-end triphosphate to release pyrophosphates. Stimulates exoribonuclease activity of Rat1, allowing it to degrade RNAs with stable secondary structure more effectively. In Scheffersomyces stipitis (strain ATCC 58785 / CBS 6054 / NBRC 10063 / NRRL Y-11545) (Yeast), this protein is Decapping nuclease RAI1.